The chain runs to 334 residues: Ketol-acid reductoisomerase (NADP(+)) (334 aa).

The KARI N-terminal Rossmann domain occupies 1–181 (MNRYYDKNAD…GGGRTGILET (181 aa)). NADP(+)-binding positions include 24–27 (YGSQ), arginine 47, serine 50, serine 52, and 82–85 (DEFQ). The active site involves histidine 107. Glycine 133 is an NADP(+) binding site. In terms of domain architecture, KARI C-terminal knotted spans 182 to 323 (SFKDETETDL…ESLRSMMPWI (142 aa)). Positions 190, 194, 226, and 230 each coordinate Mg(2+). Serine 251 serves as a coordination point for substrate.

The protein belongs to the ketol-acid reductoisomerase family. Mg(2+) is required as a cofactor.

The enzyme catalyses (2R)-2,3-dihydroxy-3-methylbutanoate + NADP(+) = (2S)-2-acetolactate + NADPH + H(+). It catalyses the reaction (2R,3R)-2,3-dihydroxy-3-methylpentanoate + NADP(+) = (S)-2-ethyl-2-hydroxy-3-oxobutanoate + NADPH + H(+). Its pathway is amino-acid biosynthesis; L-isoleucine biosynthesis; L-isoleucine from 2-oxobutanoate: step 2/4. The protein operates within amino-acid biosynthesis; L-valine biosynthesis; L-valine from pyruvate: step 2/4. Its function is as follows. Involved in the biosynthesis of branched-chain amino acids (BCAA). Catalyzes an alkyl-migration followed by a ketol-acid reduction of (S)-2-acetolactate (S2AL) to yield (R)-2,3-dihydroxy-isovalerate. In the isomerase reaction, S2AL is rearranged via a Mg-dependent methyl migration to produce 3-hydroxy-3-methyl-2-ketobutyrate (HMKB). In the reductase reaction, this 2-ketoacid undergoes a metal-dependent reduction by NADPH to yield (R)-2,3-dihydroxy-isovalerate. The protein is Ketol-acid reductoisomerase (NADP(+)) of Ruthia magnifica subsp. Calyptogena magnifica.